The chain runs to 70 residues: UPF0270 protein VS_2853 (70 aa).

It belongs to the UPF0270 family.

The polypeptide is UPF0270 protein VS_2853 (Vibrio atlanticus (strain LGP32) (Vibrio splendidus (strain Mel32))).